Consider the following 363-residue polypeptide: Protein-glutamate methylesterase/protein-glutamine glutaminase 2 (363 aa).

The region spanning 6–123 (RVLIVDDSAS…AQFLLESKIH (118 aa)) is the Response regulatory domain. Asp-57 is subject to 4-aspartylphosphate. A CheB-type methylesterase domain is found at 172 to 363 (ARTTESVICI…AMEILRAGNR (192 aa)). Active-site residues include Ser-184, His-210, and Asp-306.

Belongs to the CheB family. Phosphorylated by CheA. Phosphorylation of the N-terminal regulatory domain activates the methylesterase activity.

The protein resides in the cytoplasm. It carries out the reaction [protein]-L-glutamate 5-O-methyl ester + H2O = L-glutamyl-[protein] + methanol + H(+). The catalysed reaction is L-glutaminyl-[protein] + H2O = L-glutamyl-[protein] + NH4(+). In terms of biological role, involved in chemotaxis. Part of a chemotaxis signal transduction system that modulates chemotaxis in response to various stimuli. Catalyzes the demethylation of specific methylglutamate residues introduced into the chemoreceptors (methyl-accepting chemotaxis proteins or MCP) by CheR. Also mediates the irreversible deamidation of specific glutamine residues to glutamic acid. This is Protein-glutamate methylesterase/protein-glutamine glutaminase 2 from Rhodospirillum rubrum (strain ATCC 11170 / ATH 1.1.1 / DSM 467 / LMG 4362 / NCIMB 8255 / S1).